Reading from the N-terminus, the 315-residue chain is Lipoyl synthase (315 aa).

Cysteine 63, cysteine 68, cysteine 74, cysteine 89, cysteine 93, cysteine 96, and serine 303 together coordinate [4Fe-4S] cluster. The region spanning 75–292 (FSKGTATFMI…EEKAYEMGFV (218 aa)) is the Radical SAM core domain.

Belongs to the radical SAM superfamily. Lipoyl synthase family. [4Fe-4S] cluster serves as cofactor.

Its subcellular location is the cytoplasm. The enzyme catalyses [[Fe-S] cluster scaffold protein carrying a second [4Fe-4S](2+) cluster] + N(6)-octanoyl-L-lysyl-[protein] + 2 oxidized [2Fe-2S]-[ferredoxin] + 2 S-adenosyl-L-methionine + 4 H(+) = [[Fe-S] cluster scaffold protein] + N(6)-[(R)-dihydrolipoyl]-L-lysyl-[protein] + 4 Fe(3+) + 2 hydrogen sulfide + 2 5'-deoxyadenosine + 2 L-methionine + 2 reduced [2Fe-2S]-[ferredoxin]. It participates in protein modification; protein lipoylation via endogenous pathway; protein N(6)-(lipoyl)lysine from octanoyl-[acyl-carrier-protein]: step 2/2. Functionally, catalyzes the radical-mediated insertion of two sulfur atoms into the C-6 and C-8 positions of the octanoyl moiety bound to the lipoyl domains of lipoate-dependent enzymes, thereby converting the octanoylated domains into lipoylated derivatives. The chain is Lipoyl synthase from Chromobacterium violaceum (strain ATCC 12472 / DSM 30191 / JCM 1249 / CCUG 213 / NBRC 12614 / NCIMB 9131 / NCTC 9757 / MK).